Reading from the N-terminus, the 248-residue chain is 14-3-3 protein sigma (248 aa).

S5, S74, and S248 each carry phosphoserine.

This sequence belongs to the 14-3-3 family. In terms of assembly, homodimer. Interacts with KRT17 and SAMSN1. Found in a complex with XPO7, EIF4A1, ARHGAP1, VPS26A, VPS29 and VPS35. Interacts with GAB2. Interacts with SRPK2. Interacts with COPS6. Interacts with COP1; this interaction leads to proteasomal degradation. Interacts with the 'Thr-369' phosphorylated form of DAPK2. Interacts with PI4KB. Interacts with SLITRK1. Interacts with LRRK2; this interaction is dependent on LRRK2 phosphorylation. Interacts with PKP3 (via N-terminus); the interaction maintains the cytoplasmic pool of PKP3, facilitates PKP3 exchange at desmosomes and restricts PKP3 localization to existing desmosome cell junctions. Interacts with LCP2. Ubiquitinated. Ubiquitination by RFFL induces proteasomal degradation and indirectly regulates p53/TP53 activation.

Its subcellular location is the cytoplasm. It localises to the nucleus. It is found in the secreted. In terms of biological role, adapter protein implicated in the regulation of a large spectrum of both general and specialized signaling pathways. Binds to a large number of partners, usually by recognition of a phosphoserine or phosphothreonine motif. Binding generally results in the modulation of the activity of the binding partner. Promotes cytosolic retention of GBP1 GTPase by binding to phosphorylated GBP1, thereby inhibiting the innate immune response. Also acts as a TP53/p53-regulated inhibitor of G2/M progression. When bound to KRT17, regulates protein synthesis and epithelial cell growth by stimulating Akt/mTOR pathway. Acts to maintain desmosome cell junction adhesion in epithelial cells via interacting with and sequestering PKP3 to the cytoplasm, thereby restricting its translocation to existing desmosome structures and therefore maintaining desmosome protein homeostasis. Also acts to facilitate PKP3 exchange at desmosome plaques, thereby maintaining keratinocyte intercellular adhesion. May also regulate MDM2 autoubiquitination and degradation and thereby activate p53/TP53. This is 14-3-3 protein sigma (SFN) from Bos taurus (Bovine).